The following is a 524-amino-acid chain: Inorganic phosphate transporter 1-1 (524 aa).

Residues 1–24 (MAEQQLGVLKALDVAKTQLYHFTA) lie on the Cytoplasmic side of the membrane. A helical membrane pass occupies residues 25–45 (IVIAGMGFFTDAYDLFCVSLV). Over 46 to 70 (TKLLGRIYYFNPESAKPGSLPPHVA) the chain is Extracellular. Residues 71 to 91 (AAVNGVALCGTLSGQLFFGWL) traverse the membrane as a helical segment. Over 92-99 (GDKLGRKK) the chain is Cytoplasmic. A helical transmembrane segment spans residues 100 to 120 (VYGLTLVMMILCSVASGLSFG). Over 121–131 (HEAKGVMTTLC) the chain is Extracellular. A helical membrane pass occupies residues 132–152 (FFRFWLGFGIGGDYPLSATIM). The Cytoplasmic segment spans residues 153 to 161 (SEYANKKTR). Residues 162–182 (GAFIAAVFAMQGVGILAGGFV) traverse the membrane as a helical segment. Residues 183 to 211 (ALAVSSIFDKKFPAPTYAVNRALSTPPQV) lie on the Extracellular side of the membrane. The chain crosses the membrane as a helical span at residues 212 to 232 (DYIWRIIVMFGALPAALTYYW). Topologically, residues 233–292 (RMKMPETARYTALVAKNIKQATADMSKVLQTDIELEERVEDDVKDPKQNYGLFSKEFLRR) are cytoplasmic. A helical transmembrane segment spans residues 293–313 (HGLHLLGTTSTWFLLDIAFYS). At 314 to 348 (QNLFQKDIFSAIGWIPKAATMNATHEVFRIARAQT) the chain is on the extracellular side. Residues 349–369 (LIALCSTVPGYWFTVAFIDTI) form a helical membrane-spanning segment. Topologically, residues 370–371 (GR) are cytoplasmic. The chain crosses the membrane as a helical span at residues 372–392 (FKIQLNGFFMMTVFMFAIAFP). Over 393–402 (YNHWIKPENR) the chain is Extracellular. A helical membrane pass occupies residues 403–423 (IGFVVMYSLTFFFANFGPNAT). Residues 424 to 441 (TFIVPAEIFPARLRSTCH) are Cytoplasmic-facing. The helical transmembrane segment at 442-462 (GISAAAGKAGAIVGAFGFLYA) threads the bilayer. The Extracellular portion of the chain corresponds to 463–484 (AQSQDKAKVDAGYPPGIGVKNS). The chain crosses the membrane as a helical span at residues 485–505 (LIMLGVLNFIGMLFTFLVPEP). The Cytoplasmic portion of the chain corresponds to 506-524 (KGKSLEELSGEAEVSHDEK).

It belongs to the major facilitator superfamily. Phosphate:H(+) symporter (TC 2.A.1.9) family. As to quaternary structure, interacts with NLA. Post-translationally, ubiquitinated by NLA. Ubiquitination of PHT1-1 leads to its degradation by the proteasome. In terms of tissue distribution, mostly expressed in roots, especially in trichoblasts and in emerging secondary roots and root hairs, but not in root tips. Also present in hydathodes, axillary buds and peripheral endosperm of germinating seeds.

The protein localises to the cell membrane. With respect to regulation, inhibited by protonophores (e.g. 2,4-dinitrophenol and carbonylcyanide m-chlorophenylhydrazone), the plasma membrane H(+)-ATPase inhibitor diethylstilbestorol, and the phosphate analog arsenate. Functionally, high-affinity transporter for external inorganic phosphate. Acts as a H(+):phosphate symporter in both low- and high-Pi conditions. Confers sensitivity to arsenate. In Arabidopsis thaliana (Mouse-ear cress), this protein is Inorganic phosphate transporter 1-1 (PHT1-1).